The sequence spans 198 residues: Putative coiled-coil domain-containing protein 196 (198 aa).

Positions 24 to 117 (NYLKELNEDL…RKEMEMLWNK (94 aa)) form a coiled coil. 2 stretches are compositionally biased toward basic and acidic residues: residues 135-144 (NKTDLQDGKA) and 154-167 (TKNELETLCAEKGK). Positions 135-198 (NKTDLQDGKA…VSGTSQHHSE (64 aa)) are disordered. A compositionally biased stretch (polar residues) spans 187-198 (GQVSGTSQHHSE).

In Bos taurus (Bovine), this protein is Putative coiled-coil domain-containing protein 196.